The following is a 224-amino-acid chain: Ribose-5-phosphate isomerase A (224 aa).

Residues 26–29, 82–85, and 95–98 each bind substrate; these read TGST, DGAD, and KGGG. The active-site Proton acceptor is the Glu-104. A substrate-binding site is contributed by Lys-122.

This sequence belongs to the ribose 5-phosphate isomerase family. As to quaternary structure, homodimer.

The enzyme catalyses aldehydo-D-ribose 5-phosphate = D-ribulose 5-phosphate. It participates in carbohydrate degradation; pentose phosphate pathway; D-ribose 5-phosphate from D-ribulose 5-phosphate (non-oxidative stage): step 1/1. In terms of biological role, catalyzes the reversible conversion of ribose-5-phosphate to ribulose 5-phosphate. In Lactococcus lactis subsp. cremoris (strain SK11), this protein is Ribose-5-phosphate isomerase A.